Here is a 311-residue protein sequence, read N- to C-terminus: MRRHLSLLIGSLVLGLSLLIAPAASWAYPFWAQQNYDSPREATGKIVCANCHLAKKLTQAEVPQSVLPDTVFTASVKIPYEEGLLEIGADGSDVGLQVGAVVMLPDGFTLAPQDRWTEEMKEETEGVYFSQYSDDQPNILLVGPIPGDQHQEVVFPLLSPDPATDSNIHFGKYQLHVGGNRGRGQVYPTGEKSNNAVYTAPASGSVAAIEDGDNGSSILTINTADGAAVTETIPVGPQLLVNVGDNVEAGAALTNDPNVGGFGQVDAEIVLQNPVRIYGLLAFFAAVALAQIMLVLKKRQIEKVQAAEGNF.

The N-terminal stretch at 1–27 (MRRHLSLLIGSLVLGLSLLIAPAASWA) is a signal peptide. The heme site is built by Tyr28, Cys48, Cys51, and His52. The chain crosses the membrane as a helical span at residues 277 to 297 (IYGLLAFFAAVALAQIMLVLK).

It belongs to the cytochrome f family. As to quaternary structure, the 4 large subunits of the cytochrome b6-f complex are cytochrome b6, subunit IV (17 kDa polypeptide, PetD), cytochrome f and the Rieske protein, while the 4 small subunits are PetG, PetL, PetM and PetN. The complex functions as a dimer. It depends on heme as a cofactor.

The protein localises to the cellular thylakoid membrane. Functionally, component of the cytochrome b6-f complex, which mediates electron transfer between photosystem II (PSII) and photosystem I (PSI), cyclic electron flow around PSI, and state transitions. The sequence is that of Cytochrome f from Parasynechococcus marenigrum (strain WH8102).